A 363-amino-acid polypeptide reads, in one-letter code: DNA polymerase IV (363 aa).

One can recognise a UmuC domain in the interval 14-197 (IIHIDMDAFF…LPVEKFHGVG (184 aa)). Residues Asp-18 and Asp-115 each coordinate Mg(2+). Residue Glu-116 is part of the active site.

It belongs to the DNA polymerase type-Y family. As to quaternary structure, monomer. Requires Mg(2+) as cofactor.

It is found in the cytoplasm. The catalysed reaction is DNA(n) + a 2'-deoxyribonucleoside 5'-triphosphate = DNA(n+1) + diphosphate. In terms of biological role, poorly processive, error-prone DNA polymerase involved in untargeted mutagenesis. Copies undamaged DNA at stalled replication forks, which arise in vivo from mismatched or misaligned primer ends. These misaligned primers can be extended by PolIV. Exhibits no 3'-5' exonuclease (proofreading) activity. May be involved in translesional synthesis, in conjunction with the beta clamp from PolIII. The chain is DNA polymerase IV from Lactococcus lactis subsp. lactis (strain IL1403) (Streptococcus lactis).